A 184-amino-acid polypeptide reads, in one-letter code: Serine recombinase PinE (184 aa).

A Resolvase/invertase-type recombinase catalytic domain is found at 1-134 (MLIGYVRVST…AGLETARAQG (134 aa)). Residue Ser-9 is the O-(5'-phospho-DNA)-serine intermediate of the active site. The segment at residues 161–180 (RQKVAIIYDVGVSTLYKRFP) is a DNA-binding region (H-T-H motif).

Belongs to the site-specific recombinase resolvase family.

In terms of biological role, this protein catalyzes the inversion of an 1800-bp E.coli DNA fragment, the P region, which can exist in either orientation. The function of the inversion is not yet clear. The chain is Serine recombinase PinE (pinE) from Escherichia coli (strain K12).